Here is a 315-residue protein sequence, read N- to C-terminus: Bifunctional pinoresinol-lariciresinol reductase (315 aa).

Residues 14 to 20 (GGTGYLG), arginine 39, and lysine 48 contribute to the NADP(+) site. The active-site Proton acceptor is the lysine 142. Arginine 146 serves as a coordination point for NADP(+). Histidine 274 is a binding site for substrate.

This sequence belongs to the NmrA-type oxidoreductase family. Isoflavone reductase subfamily. Dimer.

It catalyses the reaction (+)-lariciresinol + NADP(+) = (+)-pinoresinol + NADPH + H(+). The enzyme catalyses (-)-secoisolariciresinol + NADP(+) = (+)-lariciresinol + NADPH + H(+). Reductase involved in lignan (-)-hinokinin biosynthesis. Catalyzes the enantioselective conversion of (+)-pinoresinol into (+)-lariciresinol and of (+)-lariciresinol into (-)-secoisolariciresinol. Abstracts the 4R-hydride from the NADPH cofactor during catalysis. Has also a low phenylcoumaran benzylic ether reductase activity. This Linum corymbulosum (Linum) protein is Bifunctional pinoresinol-lariciresinol reductase (PLR_Lc1).